Here is a 254-residue protein sequence, read N- to C-terminus: Cell division protein DivIB (254 aa).

The Cytoplasmic segment spans residues 1–21; the sequence is MPNAQIPVLKKNRTKKRTSRK. A helical transmembrane segment spans residues 22–42; the sequence is IAILLILLFIVLLAVLFFRSS. Topologically, residues 43 to 254 are extracellular; the sequence is LSRVSEIRFD…EEGQEKDTTQ (212 aa). In terms of domain architecture, POTRA spans 44–112; that stretch reads SRVSEIRFDG…GIIAIHIKEF (69 aa).

This sequence belongs to the FtsQ/DivIB family. DivIB subfamily.

It localises to the cell membrane. Functionally, cell division protein that may be involved in stabilizing or promoting the assembly of the division complex. This is Cell division protein DivIB from Paenibacillus polymyxa (strain E681).